Here is a 296-residue protein sequence, read N- to C-terminus: Protoheme IX farnesyltransferase (296 aa).

The Cytoplasmic segment spans residues 1–9 (MMFKQYLQV). A helical transmembrane segment spans residues 10 to 28 (TKPGIIFGNLISVIGGFLL). At 29–37 (ASKGSIDYP) the chain is on the periplasmic side. The chain crosses the membrane as a helical span at residues 38–56 (LFIYTLVGVSLVVASGCVF). Over 57 to 78 (NNFIDRDIDRKMERTKNRVLVK) the chain is Cytoplasmic. The helical transmembrane segment at 79–97 (GLISPGVSLVYATLLGIAG) threads the bilayer. At 98–107 (FMLLWFGANP) the chain is on the periplasmic side. A helical transmembrane segment spans residues 108-126 (LACWLGVMGFVVYVGIYSL). Over 127–197 (YMKRHSVYGT…YQAANIPVLP (71 aa)) the chain is Cytoplasmic. The chain crosses the membrane as a helical span at residues 198–216 (VVKGISVAKNHITLYIIAF). The Periplasmic portion of the chain corresponds to 217 to 228 (AVATLMLTLGGY). Residues 229–247 (AGYKYLVVAAAVSVWWLGM) traverse the membrane as a helical segment. Residues 248–268 (ALRGYKVEDDKVWARKLFGFS) lie on the Cytoplasmic side of the membrane. A helical transmembrane segment spans residues 269–287 (IIAITALSIMMSVDFMVPN). The Periplasmic portion of the chain corresponds to 288-296 (SQSLLTYVW).

The protein belongs to the UbiA prenyltransferase family. Protoheme IX farnesyltransferase subfamily.

The protein resides in the cell inner membrane. The enzyme catalyses heme b + (2E,6E)-farnesyl diphosphate + H2O = Fe(II)-heme o + diphosphate. The protein operates within porphyrin-containing compound metabolism; heme O biosynthesis; heme O from protoheme: step 1/1. Its function is as follows. Converts heme B (protoheme IX) to heme O by substitution of the vinyl group on carbon 2 of heme B porphyrin ring with a hydroxyethyl farnesyl side group. In Salmonella arizonae (strain ATCC BAA-731 / CDC346-86 / RSK2980), this protein is Protoheme IX farnesyltransferase.